A 126-amino-acid polypeptide reads, in one-letter code: Probable flagellum biosynthesis repressor protein FlbT (126 aa).

This sequence belongs to the FlbT family.

Its function is as follows. Has a post-transcriptional repressor function in flagellum biogenesis. Associates with the 5'-UTR of fljK mRNA and promotes its degradation. This chain is Probable flagellum biosynthesis repressor protein FlbT, found in Rhodopseudomonas palustris (strain ATCC BAA-98 / CGA009).